Here is a 203-residue protein sequence, read N- to C-terminus: GTP-binding protein ypt1 (203 aa).

GTP-binding positions include 15 to 23, 33 to 40, 63 to 67, 121 to 124, and 151 to 153; these read GDSGVGKSC, YTESYIST, DTAGQ, NKSD, and SAK. An Effector region motif is present at residues 37-45; sequence YISTIGVDF. The residue at position 164 (threonine 164) is a Phosphothreonine. S-geranylgeranyl cysteine attachment occurs at residues cysteine 202 and cysteine 203.

The protein belongs to the small GTPase superfamily. Rab family.

Its subcellular location is the endoplasmic reticulum membrane. It localises to the golgi apparatus membrane. It is found in the cytoplasm. The protein resides in the preautophagosomal structure membrane. Rab activation is generally mediated by a guanine exchange factor (GEF), while inactivation through hydrolysis of bound GTP is catalyzed by a GTPase activating protein (GAP). Its function is as follows. The small GTPases Rab are key regulators of intracellular membrane trafficking, from the formation of transport vesicles to their fusion with membranes. Rabs cycle between an inactive GDP-bound form and an active GTP-bound form that is able to recruit to membranes different set of downstream effectors directly responsible for vesicle formation, movement, tethering and fusion. Ypt1 regulates the trafficking of secretory vesicles from the endoplasmic reticulum (ER) to the Golgi. Plays a role in the initial events of the autophagic vacuole development which take place at specialized regions of the endoplasmic reticulum. Also involved in the recycling of membrane proteins. This chain is GTP-binding protein ypt1 (ypt1), found in Schizosaccharomyces pombe (strain 972 / ATCC 24843) (Fission yeast).